Consider the following 127-residue polypeptide: uncharacterized protein (127 aa).

A run of 4 helical transmembrane segments spans residues methionine 1–valine 21, threonine 32–phenylalanine 52, alanine 68–valine 88, and isoleucine 100–lysine 120.

The protein belongs to the GtrA family.

It is found in the cell membrane. This is an uncharacterized protein from Bacillus subtilis (strain 168).